Reading from the N-terminus, the 1358-residue chain is MAYSYTEKKRIRKDFGKRPQILDVPYLLTTQLDSYRQFLQADRSEDNRQDVGLHAAFKTVFPIVSYSGTVELEYVSYRLGKPVFDVKECQLRGMTYAAPLRVLLRLVIYDKDAPAGSRVVKDIKEQEVYMGELPLMTENGTFVINGTERVIVSQLHRSPGVFFDHDKGKTHSSGKLLFNARVIPYRGSWLDFEFDPKDSVFVRIDRRRKLPATVLLRALGMETEEILATFFETNTVSITKDGFDMELIPERLRGEVAAFDFKVKNKVLVESGRRITARHVRELEAAGIKSLEVPAEYLVGKVLAHAVIDEDSGELVANANDEITDELLKKLRAAGIKSFKTLYTNDLDHGPYISTTLNIDTCRSQLEAQVEIYRMMRPGEPPTKEAAENLFNNLFFTEERYDLSAVGRMKFNRRVGREEITGPGVLDKDDILAVLKTLIDIRNGNGQVDDIDHLGNRRVRSVGEMAENVFRVGLVRVERAVKERLSVAESEGLMPQELINAKPVAAAVKEFFGSSQLSQFMDQNNPLSEVTHKRRISALGPGGLTRERAGFEVRDVHPTHYGRVCPIETPEGPNIGLINSLAVYARTNDYGFLETPYRKVENGKVTNEIVYLSAIEEGQYVIAQANASLDAKGNLVDELVSCRHANEFTMSTPDKIEFMDISPKQIVSVAAALIPFLEHDDANRALMGSNMQRQAVPCLRAETAVVGTGIERTVAIDSGSSIVARRGGVVDSVDAARIVVRVNDDETEAGEPGVDIYNLTKYTRSNQNTCINQRPLVNVGDVLARGDVLADGSSTDLGEMALGQNMMVAFMPWNGYNFEDSILISERVVQEDRFTSIHIEELTCVARDTKLGPEEISADIPNVSESLLSKLDESGIVYVGAEVKPNDILVGKVTPKGETQLTPEEKLLRAIFGEKASDVKDTSLRVPSGMEGTVIDVRVFTRDGVDKDKRALQIEEAALAAVRKDLKDQLRIYEDDIYDRVEKLLVGKLAAGGPNKLKDGTKVTKTYLTEVPREKWFEVRMRTEEVNEQLEKMAASLKEQHEAFETRFKEQKEKLTQGDDLAPGVLKMVKVYLAVKRRMQPGDKMAGRHGNKGVVSMIVPVEDMPYLEDGTPVDIVLNPLGVPSRMNVGQVLETHLGWAAKGLGQKIGRMVEAKAKIDELRKFLDKIYNHSAKKVDLSDFSDEEILKLCANLKKGVPMATPVFDGAEEEEIKAMLKLADLPESGQTTLFDGRTGESFDRPVTVGYMHMLKLNHLVDDKMHARSTGPYSLVTQQPLGGKAQFGGQRFGEMEVWALEAYGAAYTLQEMLTVKSDDVQGRNKMYKNIVDGDHRMEANIPESFNVLMKEIRSLAINIELEQD.

It belongs to the RNA polymerase beta chain family. As to quaternary structure, the RNAP catalytic core consists of 2 alpha, 1 beta, 1 beta' and 1 omega subunit. When a sigma factor is associated with the core the holoenzyme is formed, which can initiate transcription.

The enzyme catalyses RNA(n) + a ribonucleoside 5'-triphosphate = RNA(n+1) + diphosphate. Its function is as follows. DNA-dependent RNA polymerase catalyzes the transcription of DNA into RNA using the four ribonucleoside triphosphates as substrates. In Thioalkalivibrio sulfidiphilus (strain HL-EbGR7), this protein is DNA-directed RNA polymerase subunit beta.